The following is a 46-amino-acid chain: MQVLNSLRSAKARHPDCQIVRRKGRLYVICKTNPRFKAVQGRKKRK.

The protein belongs to the bacterial ribosomal protein bL36 family.

The polypeptide is Large ribosomal subunit protein bL36B (Cronobacter sakazakii (strain ATCC BAA-894) (Enterobacter sakazakii)).